A 388-amino-acid chain; its full sequence is Protein RecA (388 aa).

79 to 86 (GPESSGKT) provides a ligand contact to ATP. The segment at 347–388 (IDGEEVSEQDTENKKDEPKKEEAVNEEVPLDLGDELEIEIEE) is disordered. Over residues 357–369 (TENKKDEPKKEEA) the composition is skewed to basic and acidic residues. Over residues 370 to 388 (VNEEVPLDLGDELEIEIEE) the composition is skewed to acidic residues.

The protein belongs to the RecA family.

Its subcellular location is the cytoplasm. Functionally, can catalyze the hydrolysis of ATP in the presence of single-stranded DNA, the ATP-dependent uptake of single-stranded DNA by duplex DNA, and the ATP-dependent hybridization of homologous single-stranded DNAs. It interacts with LexA causing its activation and leading to its autocatalytic cleavage. The sequence is that of Protein RecA from Streptococcus pneumoniae (strain Hungary19A-6).